Here is a 263-residue protein sequence, read N- to C-terminus: 3-methyl-2-oxobutanoate hydroxymethyltransferase (263 aa).

Mg(2+)-binding residues include Asp-45 and Asp-84. Residues 45 to 46 (DS), Asp-84, and Lys-112 each bind 3-methyl-2-oxobutanoate. Glu-114 is a Mg(2+) binding site. The active-site Proton acceptor is Glu-180.

It belongs to the PanB family. In terms of assembly, homodecamer; pentamer of dimers. Mg(2+) serves as cofactor.

The protein localises to the cytoplasm. It carries out the reaction 3-methyl-2-oxobutanoate + (6R)-5,10-methylene-5,6,7,8-tetrahydrofolate + H2O = 2-dehydropantoate + (6S)-5,6,7,8-tetrahydrofolate. The protein operates within cofactor biosynthesis; (R)-pantothenate biosynthesis; (R)-pantoate from 3-methyl-2-oxobutanoate: step 1/2. Its function is as follows. Catalyzes the reversible reaction in which hydroxymethyl group from 5,10-methylenetetrahydrofolate is transferred onto alpha-ketoisovalerate to form ketopantoate. In Klebsiella pneumoniae subsp. pneumoniae (strain ATCC 700721 / MGH 78578), this protein is 3-methyl-2-oxobutanoate hydroxymethyltransferase.